A 142-amino-acid chain; its full sequence is ATP synthase epsilon chain (142 aa).

The protein belongs to the ATPase epsilon chain family. In terms of assembly, F-type ATPases have 2 components, CF(1) - the catalytic core - and CF(0) - the membrane proton channel. CF(1) has five subunits: alpha(3), beta(3), gamma(1), delta(1), epsilon(1). CF(0) has three main subunits: a, b and c.

It localises to the cell inner membrane. Functionally, produces ATP from ADP in the presence of a proton gradient across the membrane. The sequence is that of ATP synthase epsilon chain from Koribacter versatilis (strain Ellin345).